The following is a 489-amino-acid chain: Tyrosine-protein phosphatase MSG5 (489 aa).

The span at M1–F18 shows a compositional bias: basic and acidic residues. Positions M1–N30 are disordered. Phosphoserine occurs at positions 22, 98, and 151. At T178 the chain carries Phosphothreonine. Positions G233–K375 constitute a Tyrosine-protein phosphatase domain. Residue C319 is the Phosphocysteine intermediate of the active site. Disordered regions lie at residues K375–T401 and L419–P489. Positions L419 to T450 are enriched in low complexity. Over residues E451–K460 the composition is skewed to basic and acidic residues.

Belongs to the protein-tyrosine phosphatase family. Non-receptor class dual specificity subfamily.

It carries out the reaction O-phospho-L-tyrosyl-[protein] + H2O = L-tyrosyl-[protein] + phosphate. Dual specificity phosphatase that dephosphorylates MAP kinase FUS3 on both a Tyr and a Ser or Thr. Has a role in adaptation to pheromone. The chain is Tyrosine-protein phosphatase MSG5 (MSG5) from Saccharomyces cerevisiae (strain ATCC 204508 / S288c) (Baker's yeast).